Consider the following 58-residue polypeptide: uncharacterized protein (58 aa).

This is an uncharacterized protein from Phaseolus vulgaris (Kidney bean).